We begin with the raw amino-acid sequence, 160 residues long: Putative flagellin YvzB (160 aa).

It belongs to the bacterial flagellin family. Interacts with FliW.

It is found in the bacterial flagellum. The protein is Putative flagellin YvzB (yvzB) of Bacillus subtilis (strain 168).